The primary structure comprises 225 residues: tRNA (guanine-N(7)-)-methyltransferase (225 aa).

Glu-56, Glu-81, Asp-108, and Asp-131 together coordinate S-adenosyl-L-methionine. Asp-131 is a catalytic residue. Residues Lys-135, Asp-167, and 204–207 (TKFE) each bind substrate.

Belongs to the class I-like SAM-binding methyltransferase superfamily. TrmB family.

The enzyme catalyses guanosine(46) in tRNA + S-adenosyl-L-methionine = N(7)-methylguanosine(46) in tRNA + S-adenosyl-L-homocysteine. It functions in the pathway tRNA modification; N(7)-methylguanine-tRNA biosynthesis. Functionally, catalyzes the formation of N(7)-methylguanine at position 46 (m7G46) in tRNA. The polypeptide is tRNA (guanine-N(7)-)-methyltransferase (Legionella pneumophila (strain Lens)).